The primary structure comprises 911 residues: Protein translocase subunit SecA (911 aa).

ATP is bound by residues Gln87, 105 to 109 (GEGKT), and Asp512. The interval 865–892 (AAEQDGAEEGAVATATAPVRSENKVGRN) is disordered. A compositionally biased stretch (low complexity) spans 873–883 (EGAVATATAPV). Cys895, Cys897, Cys906, and His907 together coordinate Zn(2+).

The protein belongs to the SecA family. Monomer and homodimer. Part of the essential Sec protein translocation apparatus which comprises SecA, SecYEG and auxiliary proteins SecDF-YajC and YidC. Zn(2+) serves as cofactor.

It localises to the cell inner membrane. It is found in the cytoplasm. It catalyses the reaction ATP + H2O + cellular proteinSide 1 = ADP + phosphate + cellular proteinSide 2.. Part of the Sec protein translocase complex. Interacts with the SecYEG preprotein conducting channel. Has a central role in coupling the hydrolysis of ATP to the transfer of proteins into and across the cell membrane, serving both as a receptor for the preprotein-SecB complex and as an ATP-driven molecular motor driving the stepwise translocation of polypeptide chains across the membrane. The chain is Protein translocase subunit SecA from Ectopseudomonas mendocina (strain ymp) (Pseudomonas mendocina).